Here is a 90-residue protein sequence, read N- to C-terminus: MKTIPLLFLLFIYFECDGKFIRHKDESFYECGQLIGYQQYCVDACQAHGSKEKGYCKGMAPFGLPGGCYCPKLPSNRVKMCFGALESKCA.

The signal sequence occupies residues 1-18; it reads MKTIPLLFLLFIYFECDG. An LCN-type CS-alpha/beta domain is found at 19–90; that stretch reads KFIRHKDESF…CFGALESKCA (72 aa). Intrachain disulfides connect Cys31-Cys56, Cys41-Cys68, Cys45-Cys70, and Cys81-Cys89.

In terms of tissue distribution, expressed by the venom gland.

The protein resides in the secreted. Functionally, sodium channel (Nav) specific neurotoxin. Causes impairment of movement and mild paralysis in crickets at a dose of 0.5 ug per animal. A dose of 0.8 ug per cricket causes clear flaccid paralysis. A dose of 1.0 ug per cricket causes death within 2 hours. Is not toxic to mice at a dose of 100 ug per 20 g mouse weight. This Anuroctonus phaiodactylus (Mafia scorpion) protein is Phaiodotoxin.